Reading from the N-terminus, the 278-residue chain is MEENMEEGQTQKGCFECCIKCLGGIPYASLIATILLYAGVALFCGCGHEALSGTVNILQTYFELARTAGDTLDVFTMIDIFKYVIYGIAAAFFVYGILLMVEGFFTTGAIKDLYGDFKITTCGRCVSAWFIMLTYLFMLAWLGVTAFTSLPVYMYFNVWTICRNTTLVEGANLCLDLRQFGIVTIGEEKKICTASENFLRMCESTELNMTFHLFIVALAGAGAAVIAMVHYLMVLSANWAYVKDACRMQKYEDIKSKEEQELHDIHSTRSKERLNAYT.

At M1 the chain carries N-acetylmethionine. Residues 1 to 22 (MEENMEEGQTQKGCFECCIKCL) lie on the Cytoplasmic side of the membrane. Residues 23–43 (GGIPYASLIATILLYAGVALF) form a helical membrane-spanning segment. The Extracellular segment spans residues 44–84 (CGCGHEALSGTVNILQTYFELARTAGDTLDVFTMIDIFKYV). A helical transmembrane segment spans residues 85–105 (IYGIAAAFFVYGILLMVEGFF). The Cytoplasmic portion of the chain corresponds to 106–127 (TTGAIKDLYGDFKITTCGRCVS). Residues 128–148 (AWFIMLTYLFMLAWLGVTAFT) form a helical membrane-spanning segment. Residues 149–213 (SLPVYMYFNV…STELNMTFHL (65 aa)) are Extracellular-facing. N-linked (GlcNAc...) asparagine glycosylation occurs at N164. A disulfide bridge links C174 with C192. The N-linked (GlcNAc...) asparagine glycan is linked to N208. A helical membrane pass occupies residues 214–234 (FIVALAGAGAAVIAMVHYLMV). Residues 235-278 (LSANWAYVKDACRMQKYEDIKSKEEQELHDIHSTRSKERLNAYT) are Cytoplasmic-facing. S256 is modified (phosphoserine). Residue T278 is modified to Phosphothreonine.

This sequence belongs to the myelin proteolipid protein family. In terms of assembly, interacts with OPRM1. Interacts with palmitoyltransferase ZDHHC17/HIP14; the interaction leads to palmitoylation of GPM6A. N-glycosylated. In terms of processing, palmitoylated by ZDHHC17/HIP14. Widely expressed in the CNS. Found especially in the granule cell layer of the cerebellum but not in the molecular layer or white matter. Expressed in the immature embryonic retina including the nerve fiber layer (NFL), inner plexiform layer (IPL), and outer plexiform layer (OPL). Weakly expressed in processes of Mueller glia cells.

It is found in the cell membrane. The protein resides in the cell projection. Its subcellular location is the axon. It localises to the growth cone. The protein localises to the dendritic spine. It is found in the filopodium. The protein resides in the neuron projection. In terms of biological role, involved in neuronal differentiation, including differentiation and migration of neuronal stem cells. Plays a role in neuronal plasticity and is involved in neurite and filopodia outgrowth, filopodia motility and probably synapse formation. Gpm6a-induced filopodia formation involves mitogen-activated protein kinase (MAPK) and Src signaling pathways. Conflictingly, PubMed:22162747 reports that induced cellular protrusions are simple membrane-wrapped tubules without actin or tubulin-based cytoskeletons and with Gpm6a gliding along membrane edges indicative for a function in actin-independent membrane deformation. May be involved in neuronal NGF-dependent Ca(2+) influx. May be involved in regulation of endocytosis and intracellular trafficking of G-protein-coupled receptors (GPCRs); enhances internalization and recycling of mu-type opioid receptor. In Mus musculus (Mouse), this protein is Neuronal membrane glycoprotein M6-a (Gpm6a).